The primary structure comprises 398 residues: Cyclic GMP-AMP synthase-like receptor (398 aa).

Residues S57 and 69-71 each bind ATP; that span reads EFD. Mg(2+) is bound by residues E69, D71, and D192. GTP contacts are provided by residues D192 and 240–247; that span reads SLSFQEQE. ATP contacts are provided by residues 244 to 247, K265, and 277 to 281; these read QEQE and SYYIK. Mn(2+) contacts are provided by I288, E289, and D292.

Belongs to the mab-21 family. It depends on Mg(2+) as a cofactor. Mn(2+) serves as cofactor.

The catalysed reaction is GTP + ATP = 2',3'-cGAMP + 2 diphosphate. The enzyme catalyses GTP + ATP = pppGp(2'-5')A + diphosphate. It catalyses the reaction pppGp(2'-5')A = 2',3'-cGAMP + diphosphate. The enzyme activity is specifically activated by double-stranded RNA (dsRNA). In terms of biological role, nucleotidyltransferase that catalyzes the formation of cyclic GMP-AMP (2',3'-cGAMP) from ATP and GTP and plays a key role in innate immunity. Acts as a key sensor of double-stranded RNA (dsRNA), the presence of dsRNA in the cytoplasm being a danger signal that triggers the immune responses. Directly binds dsRNA, activating the nucleotidyltransferase activity, leading to synthesis of 2',3'-cGAMP, a second messenger that binds to and activates Sting, thereby triggering the antiviral immune response via activation of the NF-kappa-B transcription factor Rel (Relish). This Tribolium castaneum (Red flour beetle) protein is Cyclic GMP-AMP synthase-like receptor.